The primary structure comprises 816 residues: Phosphatidylinositol 4-kinase beta (816 aa).

Disordered stretches follow at residues 1–28 (MGDT…NGGS), 93–120 (PPTG…RRRR), and 249–318 (HRKR…SFSS). At glycine 2 the chain carries N-acetylglycine. The interval 2–68 (GDTVVAPAPL…VKLSHGGVAS (67 aa)) is interaction with ACBD3. A PIK helical domain is found at 49–242 (QKACQEVLQK…GTKLRRLILS (194 aa)). Position 258 is a phosphoserine (serine 258). Threonine 263 is subject to Phosphothreonine. A phosphoserine mark is found at serine 266, serine 275, serine 277, serine 284, serine 294, serine 428, and serine 511. Positions 278–294 (DATASISLSSSLKRTAS) are enriched in low complexity. Phosphothreonine is present on residues threonine 517 and threonine 519. The PI3K/PI4K catalytic domain occupies 535–801 (EPWQEKVRRI…MVDGSMRSIT (267 aa)). A G-loop region spans residues 541–547 (VRRIREG). Residues 668 to 676 (QVKDRHNGN) are catalytic loop. Residues 687–711 (HIDFGFILSSSPRNLGFETSAFKLT) form an activation loop region.

This sequence belongs to the PI3/PI4-kinase family. Type III PI4K subfamily. Interacts with ARF1 and ARF3 in the Golgi complex, but not with ARF4, ARF5 or ARF6. Interacts with NCS1/FREQ in a calcium-independent manner. Interacts with CALN1/CABP8 and CALN2/CABP7; in a calcium-dependent manner; this interaction competes with NCS1/FREQ binding. Interacts with ACBD3. Interacts with ARMH3, YWHAB, YWHAE, YWHAG, YWHAH, YWHAQ, YWHAZ and SFN. Interacts with GGA2 (via VHS domain); the interaction is important for PI4KB location at the Golgi apparatus membrane. Interacts with ATG9A. Mg(2+) is required as a cofactor. Requires Mn(2+) as cofactor.

Its subcellular location is the endomembrane system. It is found in the mitochondrion outer membrane. The protein localises to the rough endoplasmic reticulum membrane. The protein resides in the golgi apparatus. It localises to the golgi apparatus membrane. It carries out the reaction a 1,2-diacyl-sn-glycero-3-phospho-(1D-myo-inositol) + ATP = a 1,2-diacyl-sn-glycero-3-phospho-(1D-myo-inositol 4-phosphate) + ADP + H(+). Inhibited by wortmannin. Increased kinase activity upon interaction with NCS1/FREQ. In terms of biological role, phosphorylates phosphatidylinositol (PI) in the first committed step in the production of the second messenger inositol-1,4,5,-trisphosphate (PIP). May regulate Golgi disintegration/reorganization during mitosis, possibly via its phosphorylation. Involved in Golgi-to-plasma membrane trafficking. May play an important role in the inner ear development. This Rhinolophus ferrumequinum (Greater horseshoe bat) protein is Phosphatidylinositol 4-kinase beta (PI4KB).